Here is a 348-residue protein sequence, read N- to C-terminus: Hereditary hemochromatosis protein homolog (348 aa).

Positions 1–22 are cleaved as a signal peptide; that stretch reads MGPRARPALFFLILLRTVAAQG. Residues 23-114 form an alpha-1 region; the sequence is RPPRSHSLRY…IMDNHNHSKE (92 aa). The Extracellular portion of the chain corresponds to 23–306; the sequence is RPPRSHSLRY…WEPSLSNTLV (284 aa). Residues N110, N130, and N234 are each glycosylated (N-linked (GlcNAc...) asparagine). The interval 115–205 is alpha-2; the sequence is SHTLQVILGC…ELGRGVLDQQ (91 aa). 2 disulfides stabilise this stretch: C124/C187 and C225/C282. Residues 206 to 297 form an alpha-3 region; that stretch reads VPPLVKVTHH…GLDQPLTATW (92 aa). One can recognise an Ig-like C1-type domain in the interval 207 to 296; that stretch reads PPLVKVTHHV…PGLDQPLTAT (90 aa). The interval 298-306 is connecting peptide; the sequence is EPSLSNTLV. A helical membrane pass occupies residues 307-330; sequence TGVISGIAVCVIIFLIGILFRILR. Residues 331 to 348 are Cytoplasmic-facing; it reads KRQASRGAMGDYVLAECE.

The protein belongs to the MHC class I family. As to quaternary structure, binds TFR through the extracellular domain in a pH-dependent manner.

It is found in the cell membrane. In terms of biological role, binds to transferrin receptor (TFR) and reduces its affinity for iron-loaded transferrin. This Dicerorhinus sumatrensis (Sumatran rhinoceros) protein is Hereditary hemochromatosis protein homolog (HFE).